A 218-amino-acid polypeptide reads, in one-letter code: Riboflavin kinase (218 aa).

The tract at residues 1–27 is disordered; it reads MRPDGPRDPVAGPDSGPEPPYPVRLSG. Residues Thr-44 and Asn-46 each coordinate Mg(2+). Glu-120 acts as the Nucleophile in catalysis.

It belongs to the flavokinase family. Zn(2+) serves as cofactor. Requires Mg(2+) as cofactor.

The catalysed reaction is riboflavin + ATP = FMN + ADP + H(+). Its pathway is cofactor biosynthesis; FMN biosynthesis; FMN from riboflavin (ATP route): step 1/1. In terms of biological role, catalyzes the phosphorylation of riboflavin (vitamin B2) to form flavin mononucleotide (FMN) coenzyme. This Neosartorya fischeri (strain ATCC 1020 / DSM 3700 / CBS 544.65 / FGSC A1164 / JCM 1740 / NRRL 181 / WB 181) (Aspergillus fischerianus) protein is Riboflavin kinase (fmn1).